Consider the following 367-residue polypeptide: MEKVKSSYLPYTIRILISFLFIISAIAKMYPSPYFAISTFEVKQLYPLGFSEIIAPWFSRILIGIELALGILILQNNFLRKLIIPITILLLAVFVGHLSYVTFLSGGNTGNCGCFGELIPMTPIQAIIKNIIAIFLLVYLFFLLSKTNDKNNFYVVIGITLATIISLFLLAPIKKNTNDFTISPIENTLIDSTKNEIIAPILKDSVITTVKVDSVKKAIPTKIEEVISTTEPTKHKSGYAKLFPKIDTGRKTLCFFVPGCDHCRKAAKELTELKQKNANFPEILIIFMNEEVDLIPDFFKETGAEYPYKIIEIIPFWNALGTGKDTPGVKYIWNGNTYKYYNGITDNKFNPIDYQALINKPFSELKK.

A run of 5 helical transmembrane segments spans residues 15 to 35 (ILISFLFIISAIAKMYPSPYF), 53 to 73 (IIAPWFSRILIGIELALGILI), 83 to 103 (IIPITILLLAVFVGHLSYVTF), 124 to 144 (IQAIIKNIIAIFLLVYLFFLL), and 153 to 173 (FYVVIGITLATIISLFLLAPI).

It is found in the membrane. The chain is Protein TlpB (tlpB) from Flavobacterium psychrophilum.